A 408-amino-acid polypeptide reads, in one-letter code: Putative odorant receptor 92a (408 aa).

The Cytoplasmic segment spans residues 1–52 (MLFRKRKPKSDDEVITFDELTRFPMTFYKTIGEDLYSDRDPNVIRRYLLRFY). A helical membrane pass occupies residues 53-73 (LVLGFLNFNAYVVGEIAYFIV). Residue His-74 is a topological domain, extracellular. A helical transmembrane segment spans residues 75–95 (IMSTTTLLEATAVAPCIGFSF). The Cytoplasmic portion of the chain corresponds to 96–144 (MADFKQFGLTVNRKRLVRLLDDLKEIFPLDLEAQRKYNVSFYRKHMNRV). A helical transmembrane segment spans residues 145 to 165 (MTLFTILCMTYTSSFSFYPAI). The Extracellular portion of the chain corresponds to 166–209 (KSTIKYYLMGSEIFERNYGFHILFPYDAETDLTVYWFSYWGLAH). Residues 210 to 230 (CAYVAGVSYVCVDLLLIATIT) traverse the membrane as a helical segment. At 231-276 (QLTMHFNFIANDLEAYEGGDHTDEENIKYLHNLVVYHARALDLSEE) the chain is on the cytoplasmic side. A helical transmembrane segment spans residues 277-301 (VNNIFSFLILWNFIAASLVICFAGF). Topologically, residues 302–310 (QITASNVED) are extracellular. The helical transmembrane segment at 311 to 331 (IVLYFIFFSASLVQVFVVCYY) threads the bilayer. The Cytoplasmic portion of the chain corresponds to 332–378 (GDEMISSSSRIGHSAFNQNWLPCSTKYKRILQFIIARSQKPASIRPP). Residues 379–399 (TFPPISFNTFMKVISMSYQFF) form a helical membrane-spanning segment. At 400 to 408 (ALLRTTYYG) the chain is on the extracellular side.

It belongs to the insect chemoreceptor superfamily. Heteromeric odorant receptor channel (TC 1.A.69) family. Or49a subfamily. Interacts with Orco. Complexes exist early in the endomembrane system in olfactory sensory neurons (OSNs), coupling these complexes to the conserved ciliary trafficking pathway.

Its subcellular location is the cell membrane. In terms of biological role, odorant receptor which mediates acceptance or avoidance behavior, depending on its substrates. The odorant receptor repertoire encodes a large collection of odor stimuli that vary widely in identity, intensity, and duration. May form a complex with Orco to form odorant-sensing units, providing sensitive and prolonged odorant signaling and calcium permeability. This is Putative odorant receptor 92a (Or92a) from Drosophila melanogaster (Fruit fly).